Here is a 152-residue protein sequence, read N- to C-terminus: Superoxide dismutase [Cu-Zn] 2 (152 aa).

3 residues coordinate Cu cation: His-45, His-47, and His-62. A disulfide bridge links Cys-56 with Cys-145. The Zn(2+) site is built by His-62, His-70, His-79, and Asp-82. His-119 provides a ligand contact to Cu cation.

It belongs to the Cu-Zn superoxide dismutase family. In terms of assembly, homodimer. Cu cation is required as a cofactor. The cofactor is Zn(2+).

It localises to the cytoplasm. It catalyses the reaction 2 superoxide + 2 H(+) = H2O2 + O2. Destroys radicals which are normally produced within the cells and which are toxic to biological systems. This Oryza sativa subsp. japonica (Rice) protein is Superoxide dismutase [Cu-Zn] 2 (SODCC2).